Consider the following 207-residue polypeptide: High frequency lysogenization protein HflD homolog (207 aa).

This sequence belongs to the HflD family.

Its subcellular location is the cytoplasm. The protein resides in the cell inner membrane. In Teredinibacter turnerae (strain ATCC 39867 / T7901), this protein is High frequency lysogenization protein HflD homolog.